Here is a 129-residue protein sequence, read N- to C-terminus: Prefoldin subunit alpha (129 aa).

Belongs to the prefoldin alpha subunit family. Heterohexamer of two alpha and four beta subunits.

It is found in the cytoplasm. In terms of biological role, molecular chaperone capable of stabilizing a range of proteins. Seems to fulfill an ATP-independent, HSP70-like function in archaeal de novo protein folding. The chain is Prefoldin subunit alpha from Thermofilum pendens (strain DSM 2475 / Hrk 5).